An 896-amino-acid chain; its full sequence is Protein argonaute 9 (896 aa).

The PAZ domain occupies 267–380 (PVVDFLLANQ…FPIEFCNLVS (114 aa)). The 308-residue stretch at 550 to 857 (FLLCILAERK…AAAQMGTVMK (308 aa)) folds into the Piwi domain.

The protein belongs to the argonaute family. Ago subfamily. As to expression, expressed in embryonic shoot apex region, pollen and developing ovules.

Involved in RNA-mediated post-transcriptional gene silencing (PTGS). Main component of the RNA-induced silencing complex (RISC) that binds to a short guide RNA such as a microRNA (miRNA) or small interfering RNA (siRNA). RISC uses the mature miRNA or siRNA as a guide for slicer-directed cleavage of homologous mRNAs to repress gene expression. Associates preferentially with small RNAs of 24 nucleotide in length with a 5' terminal adenosine. Interacts with 24 nucleotide sRNAs derived from transposable elements (TEs). Required to silence pericentrometric-located TEs in female gametes and their accessory cells. Necessary to inactivate a significant proportion of long terminal repeat retrotransposons (LTRs) in the ovule. Required to specify cell fate in ovule. Involved in the control of female gamete formation by restricting the specification of gametophyte precursors in a dosage-dependent, non-cell-autonomous manner. Targeted by turnip yellows virus (TuYV) protein P0 (via F-box-like domain) for probable proteasome degradation and thereby inactivating AGO9 function in RNA silencing. This is Protein argonaute 9 (AGO9) from Arabidopsis thaliana (Mouse-ear cress).